Reading from the N-terminus, the 432-residue chain is Adenylosuccinate synthetase (432 aa).

GTP contacts are provided by residues 13-19 (GDEGKGK) and 41-43 (GHT). Aspartate 14 acts as the Proton acceptor in catalysis. The Mg(2+) site is built by aspartate 14 and glycine 41. IMP-binding positions include 14–17 (DEGK), 39–42 (NAGH), threonine 130, arginine 144, glutamine 225, threonine 240, and arginine 304. Histidine 42 acts as the Proton donor in catalysis. 300–306 (ATTGRRR) is a binding site for substrate. Residues arginine 306, 332-334 (KLD), and 415-417 (STG) each bind GTP.

The protein belongs to the adenylosuccinate synthetase family. In terms of assembly, homodimer. Requires Mg(2+) as cofactor.

It is found in the cytoplasm. It catalyses the reaction IMP + L-aspartate + GTP = N(6)-(1,2-dicarboxyethyl)-AMP + GDP + phosphate + 2 H(+). Its pathway is purine metabolism; AMP biosynthesis via de novo pathway; AMP from IMP: step 1/2. In terms of biological role, plays an important role in the de novo pathway of purine nucleotide biosynthesis. Catalyzes the first committed step in the biosynthesis of AMP from IMP. This Salmonella paratyphi C (strain RKS4594) protein is Adenylosuccinate synthetase.